The sequence spans 130 residues: Small ribosomal subunit protein uS9 (130 aa).

A disordered region spans residues 109-130 (RMKERKKYGLKKARRAPQFSKR). Basic residues predominate over residues 111 to 130 (KERKKYGLKKARRAPQFSKR).

The protein belongs to the universal ribosomal protein uS9 family.

The polypeptide is Small ribosomal subunit protein uS9 (Clostridium kluyveri (strain NBRC 12016)).